The primary structure comprises 156 residues: MDINITLIGQMITFAIFIGFTMKFVWPPLRKALEERREKIAEGLASADRASRELEVAKRQSAEILREAKAKATEIVENAYVRAHKVDEQAKEEAIAAADKIKSMAIAEIEQEKVKAKEQLKQELVNLAMAAASKIIAASVDEKASKKVLEDFVEKV.

Residues Ile5–Pro27 traverse the membrane as a helical segment.

This sequence belongs to the ATPase B chain family. In terms of assembly, F-type ATPases have 2 components, F(1) - the catalytic core - and F(0) - the membrane proton channel. F(1) has five subunits: alpha(3), beta(3), gamma(1), delta(1), epsilon(1). F(0) has three main subunits: a(1), b(2) and c(10-14). The alpha and beta chains form an alternating ring which encloses part of the gamma chain. F(1) is attached to F(0) by a central stalk formed by the gamma and epsilon chains, while a peripheral stalk is formed by the delta and b chains.

It is found in the cell inner membrane. Functionally, f(1)F(0) ATP synthase produces ATP from ADP in the presence of a proton or sodium gradient. F-type ATPases consist of two structural domains, F(1) containing the extramembraneous catalytic core and F(0) containing the membrane proton channel, linked together by a central stalk and a peripheral stalk. During catalysis, ATP synthesis in the catalytic domain of F(1) is coupled via a rotary mechanism of the central stalk subunits to proton translocation. In terms of biological role, component of the F(0) channel, it forms part of the peripheral stalk, linking F(1) to F(0). This chain is ATP synthase subunit b, found in Francisella tularensis subsp. holarctica (strain OSU18).